The following is a 381-amino-acid chain: Protein pelota homolog (381 aa).

It belongs to the eukaryotic release factor 1 family. Pelota subfamily. In terms of assembly, component of the Pelota-HBS1L complex, also named Dom34-Hbs1 complex, composed of pelo-1 and hbs-1. Requires a divalent metal cation as cofactor.

The protein localises to the cytoplasm. It localises to the nucleus. Functionally, component of the Pelota-HBS1L complex, a complex that recognizes stalled ribosomes and triggers the No-Go Decay (NGD) pathway. In the Pelota-HBS1L complex, pelo-1 recognizes ribosomes stalled at the 3' end of an mRNA and engages stalled ribosomes by destabilizing mRNA in the mRNA channel. Following ribosome-binding, the Pelota-HBS1L complex promotes the disassembly of stalled ribosomes, followed by degradation of damaged mRNAs as part of the NGD pathway. This Caenorhabditis elegans protein is Protein pelota homolog.